The primary structure comprises 241 residues: Probable transcriptional regulatory protein H16_A0916 (241 aa).

The protein belongs to the TACO1 family.

The protein localises to the cytoplasm. The chain is Probable transcriptional regulatory protein H16_A0916 from Cupriavidus necator (strain ATCC 17699 / DSM 428 / KCTC 22496 / NCIMB 10442 / H16 / Stanier 337) (Ralstonia eutropha).